The sequence spans 250 residues: 1-(5-phosphoribosyl)-5-[(5-phosphoribosylamino)methylideneamino] imidazole-4-carboxamide isomerase (250 aa).

Asp8 (proton acceptor) is an active-site residue. Asp131 acts as the Proton donor in catalysis.

It belongs to the HisA/HisF family.

The protein resides in the cytoplasm. The catalysed reaction is 1-(5-phospho-beta-D-ribosyl)-5-[(5-phospho-beta-D-ribosylamino)methylideneamino]imidazole-4-carboxamide = 5-[(5-phospho-1-deoxy-D-ribulos-1-ylimino)methylamino]-1-(5-phospho-beta-D-ribosyl)imidazole-4-carboxamide. It participates in amino-acid biosynthesis; L-histidine biosynthesis; L-histidine from 5-phospho-alpha-D-ribose 1-diphosphate: step 4/9. This Paraburkholderia phymatum (strain DSM 17167 / CIP 108236 / LMG 21445 / STM815) (Burkholderia phymatum) protein is 1-(5-phosphoribosyl)-5-[(5-phosphoribosylamino)methylideneamino] imidazole-4-carboxamide isomerase.